A 177-amino-acid polypeptide reads, in one-letter code: Small ribosomal subunit protein mS23 (177 aa).

Residue Ala-2 is modified to N-acetylalanine. Residue Lys-83 is modified to N6-succinyllysine. Lys-102 is subject to N6-acetyllysine. The interval 145-177 (LQASSEGHEPQEDDDLAQRGQVKQEPETAPSPP) is disordered.

This sequence belongs to the mitochondrion-specific ribosomal protein mS23 family. As to quaternary structure, component of the mitochondrial ribosome small subunit (28S) which comprises a 12S rRNA and about 30 distinct proteins.

It is found in the mitochondrion. The polypeptide is Small ribosomal subunit protein mS23 (Mus musculus (Mouse)).